The primary structure comprises 356 residues: Protein SEC13 homolog (356 aa).

6 WD repeats span residues 11 to 50, 54 to 95, 101 to 142, 149 to 205, 210 to 253, and 259 to 298; these read EHEDMVHHAALDFYGLLLATCSSDGSVRIFHSRKNNKALA, GHQG…DWTK, NHDS…GVWD, AHTI…WVEE, AHSD…SEWT, and TFDDAVWSISWSTTGNILAVTGGDNNVTLWKENTEGQWIR. The interval 307 to 356 is disordered; sequence IQSKQPSHLPHSHSQQQQALQQHQQQAPSHPGPSSDSEHSSNLSNSQLSN. Residues 308–356 show a composition bias toward low complexity; it reads QSKQPSHLPHSHSQQQQALQQHQQQAPSHPGPSSDSEHSSNLSNSQLSN.

This sequence belongs to the WD repeat SEC13 family. Probable component of the nuclear pore complex (NPC). Component of the GATOR complex consisting of mio, Nup44A/Seh1, Im11, Nplr3, Nplr2, Wdr24, Wdr59 and Sec13. Within the GATOR complex, probable component of the GATOR2 subcomplex which is likely composed of mio, Nup44A/Seh1, Wdr24, Wdr59 and Sec13. Interacts with msk. Interacts (preferentially when phosphorylated) with Mad. The GATOR2 complex associates with unmet in the absence of S-adenosyl-L-methionine; the mio-Wdr24-Nup44A subcomplex is essential and sufficient for this interaction while Wdr59 and Sec13 are dispensable. This association acts as a nutrient sensor to inhibit mTORC1 signaling in the absence of methionine. In terms of tissue distribution, salivary glands.

It localises to the nucleus envelope. The protein localises to the nucleus. Its subcellular location is the nucleoplasm. It is found in the cytoplasm. The protein resides in the cytoskeleton. It localises to the microtubule organizing center. The protein localises to the centrosome. Its subcellular location is the nuclear pore complex. It is found in the cytoplasmic vesicle. The protein resides in the COPII-coated vesicle membrane. It localises to the endoplasmic reticulum membrane. The protein localises to the lysosome membrane. Its function is as follows. Functions as a component of the nuclear pore complex (NPC) and the COPII coat. At the endoplasmic reticulum, SEC13 is involved in the biogenesis of COPII-coated vesicles. Recruited to transcriptionally active chromatin at the time of transcription initiation by RNA polymerase II. Required for proper expression of ecdysone-responsive genes such as Eip74EF and Eip75B during larval development. Required for reactivation of transcription after heat shock. Required for nuclear import of phosphorylated Mad via importin msk. Has no role in classical nuclear localization signal (cNLS)-dependent nuclear import via importin-beta. In terms of biological role, a component of the GATOR subcomplex GATOR2 which functions as an activator of the amino acid-sensing branch of the mTORC1 signaling pathway. The two GATOR subcomplexes, GATOR1 and GATOR2, regulate the mTORC1 pathway in order to mediate metabolic homeostasis, female gametogenesis and the response to amino acid limitation and complete starvation. GATOR2 activates the mTORC1 signaling pathway through the inhibition of the GATOR1 subcomplex, controlling the switch to cell proliferation and growth under nutrient replete conditions and during female oocyte development. In Drosophila melanogaster (Fruit fly), this protein is Protein SEC13 homolog.